A 222-amino-acid polypeptide reads, in one-letter code: Pyrrolidone-carboxylate peptidase (222 aa).

Active-site residues include glutamate 80, cysteine 146, and histidine 170.

It belongs to the peptidase C15 family. Homotetramer.

Its subcellular location is the cytoplasm. The enzyme catalyses Release of an N-terminal pyroglutamyl group from a polypeptide, the second amino acid generally not being Pro.. In terms of biological role, removes 5-oxoproline from various penultimate amino acid residues except L-proline. The polypeptide is Pyrrolidone-carboxylate peptidase (Mycobacterium marinum (strain ATCC BAA-535 / M)).